Here is an 82-residue protein sequence, read N- to C-terminus: Small ribosomal subunit protein bS16 (82 aa).

This sequence belongs to the bacterial ribosomal protein bS16 family.

The chain is Small ribosomal subunit protein bS16 from Pseudoalteromonas translucida (strain TAC 125).